The chain runs to 237 residues: Ribonuclease PH (237 aa).

Residues R86 and 124 to 126 contribute to the phosphate site; that span reads GTR.

The protein belongs to the RNase PH family. As to quaternary structure, homohexameric ring arranged as a trimer of dimers.

The catalysed reaction is tRNA(n+1) + phosphate = tRNA(n) + a ribonucleoside 5'-diphosphate. Its function is as follows. Phosphorolytic 3'-5' exoribonuclease that plays an important role in tRNA 3'-end maturation. Removes nucleotide residues following the 3'-CCA terminus of tRNAs; can also add nucleotides to the ends of RNA molecules by using nucleoside diphosphates as substrates, but this may not be physiologically important. Probably plays a role in initiation of 16S rRNA degradation (leading to ribosome degradation) during starvation. The protein is Ribonuclease PH of Methylobacterium sp. (strain 4-46).